The sequence spans 529 residues: Low affinity inorganic phosphate transporter 5 (529 aa).

Residues 1 to 21 are Cytoplasmic-facing; it reads MASNNLNVLNALDTAHTQWYH. The helical transmembrane segment at 22-42 threads the bilayer; that stretch reads VTAVVIAGMGFFTDAYDLFCI. Residues 43–71 lie on the Extracellular side of the membrane; that stretch reads STISKLLGRLYYYDPHTHAPGKLPHTVNN. A helical transmembrane segment spans residues 72–92; the sequence is WVTGVALVGTLTGQLVFGWLG. The Cytoplasmic portion of the chain corresponds to 93 to 99; it reads DKLGRKK. Residues 100-120 form a helical membrane-spanning segment; it reads VYGLTLILMVICALSSGLSFG. The Extracellular segment spans residues 121–124; it reads YSRK. A helical membrane pass occupies residues 125 to 145; that stretch reads VVIGTLCFFRFWLGFGIGGDY. The Cytoplasmic portion of the chain corresponds to 146-163; it reads PLSATIMSEYANKRTRGA. A helical transmembrane segment spans residues 164 to 184; sequence FIAAVFAMQGVGIIFAGLVLM. Residues 185–211 lie on the Extracellular side of the membrane; it reads TVSKVFLMRYAGKAFSTDEVFSTEPEA. The chain crosses the membrane as a helical span at residues 212–232; sequence DYVWRIVLMLGALPALLTYYW. At 233 to 291 the chain is on the cytoplasmic side; that stretch reads RMKMPETGRYTAIIEGNAKQAAIDMGKVLEIEIQAEGEKLAKFKSANDYSLLSNEFFQR. The chain crosses the membrane as a helical span at residues 292 to 312; sequence HGLHLIGTMSTWFLLDIAFYS. Over 313–344 the chain is Extracellular; sequence QNLTQKDIFPTMGLVSDAKSISALREMFETSR. Residue N314 is glycosylated (N-linked (GlcNAc...) asparagine). A helical membrane pass occupies residues 345-365; it reads AMFVIALLGTFPGYWFTVFFI. Topologically, residues 366–374 are cytoplasmic; the sequence is EKIGRFKIQ. A helical transmembrane segment spans residues 375-395; it reads LMGFFMMSIFMAIIGVRYDYL. The Extracellular portion of the chain corresponds to 396 to 405; that stretch reads KTKDHKWTFA. A helical membrane pass occupies residues 406–426; the sequence is ALYGLTFFFANSGPNSTTFVL. Residues 427–472 lie on the Cytoplasmic side of the membrane; the sequence is PAELFPTRVRSTCHALSAASGKAGAMVSAFGVQQYTQDGEVHKIKK. The chain crosses the membrane as a helical span at residues 473 to 493; the sequence is AMLFLAFTNMVGFCCTFLVTE. Over 494-529 the chain is Extracellular; it reads TKGRSLEEISGEDENQNETKMKGRPVSGGHQDDGWD. Positions 500–529 are disordered; that stretch reads EEISGEDENQNETKMKGRPVSGGHQDDGWD. The N-linked (GlcNAc...) asparagine glycan is linked to N510.

The protein belongs to the major facilitator superfamily. Phosphate:H(+) symporter (TC 2.A.1.9) family. Expressed at low levels in non-mycorrhized roots.

It is found in the cell membrane. The catalysed reaction is phosphate(in) + H(+)(in) = phosphate(out) + H(+)(out). Low-affinity transporter for external inorganic phosphate (Pi) probably involved in the acquisition of phosphate released by arbuscular mycorrhizal (AM) fungi during AM symbiosis. In Petunia hybrida (Petunia), this protein is Low affinity inorganic phosphate transporter 5.